A 326-amino-acid polypeptide reads, in one-letter code: Metal-binding protein YtgA (326 aa).

Residues 1–21 (MFFLHVRKYKHVIGGLLCLAG) form the signal peptide. Fe(2+) contacts are provided by His75, His141, His207, and Asp299.

It belongs to the bacterial solute-binding protein 9 family. In terms of assembly, monomer.

The protein localises to the periplasm. Its function is as follows. Part of the ATP-binding cassette (ABC) transport system YtgABCD involved in metal import. Binds Fe(2+), Mn(2+) and Ni(2+), with a preference for Fe(2+) and delivers them to the membrane permease for translocation into the cytoplasm. In Chlamydia muridarum (strain MoPn / Nigg), this protein is Metal-binding protein YtgA.